The primary structure comprises 138 residues: Phospholipase A2 EC1 (138 aa).

Residues 1-16 (MRTLWIVAVWLMSVEG) form the signal peptide. 7 cysteine pairs are disulfide-bonded: C42–C131, C44–C60, C59–C111, C65–C138, C66–C104, C73–C97, and C91–C102. Positions 43, 45, and 47 each coordinate Ca(2+). Residue H63 is part of the active site. D64 lines the Ca(2+) pocket. Residue D105 is part of the active site.

This sequence belongs to the phospholipase A2 family. Group II subfamily. Ca(2+) serves as cofactor.

The protein resides in the secreted. It carries out the reaction a 1,2-diacyl-sn-glycero-3-phosphocholine + H2O = a 1-acyl-sn-glycero-3-phosphocholine + a fatty acid + H(+). This Echis coloratus (Carpet viper) protein is Phospholipase A2 EC1.